Consider the following 290-residue polypeptide: ATP synthase gamma chain (290 aa).

It belongs to the ATPase gamma chain family. In terms of assembly, F-type ATPases have 2 components, CF(1) - the catalytic core - and CF(0) - the membrane proton channel. CF(1) has five subunits: alpha(3), beta(3), gamma(1), delta(1), epsilon(1). CF(0) has three main subunits: a, b and c.

It localises to the cell membrane. Produces ATP from ADP in the presence of a proton gradient across the membrane. The gamma chain is believed to be important in regulating ATPase activity and the flow of protons through the CF(0) complex. In Wolbachia pipientis subsp. Culex pipiens (strain wPip), this protein is ATP synthase gamma chain.